Here is a 440-residue protein sequence, read N- to C-terminus: Xylose isomerase (440 aa).

Catalysis depends on residues histidine 101 and aspartate 104. Mg(2+) is bound by residues glutamate 232, glutamate 268, histidine 271, aspartate 296, aspartate 307, aspartate 309, and aspartate 339.

Belongs to the xylose isomerase family. In terms of assembly, homotetramer. Mg(2+) is required as a cofactor.

It is found in the cytoplasm. The catalysed reaction is alpha-D-xylose = alpha-D-xylulofuranose. The sequence is that of Xylose isomerase from Escherichia coli O157:H7.